A 520-amino-acid polypeptide reads, in one-letter code: GMP synthase [glutamine-hydrolyzing] (520 aa).

The Glutamine amidotransferase type-1 domain occupies 9 to 202 (KILILDFGSQ…VRAICGCTGH (194 aa)). Catalysis depends on cysteine 86, which acts as the Nucleophile. Active-site residues include histidine 176 and glutamate 178. One can recognise a GMPS ATP-PPase domain in the interval 203-395 (WTPGQIIEDA…LGLPHQMVWR (193 aa)). 230–236 (SGGVDSS) contacts ATP.

In terms of assembly, homodimer.

The catalysed reaction is XMP + L-glutamine + ATP + H2O = GMP + L-glutamate + AMP + diphosphate + 2 H(+). Its pathway is purine metabolism; GMP biosynthesis; GMP from XMP (L-Gln route): step 1/1. Its function is as follows. Catalyzes the synthesis of GMP from XMP. The sequence is that of GMP synthase [glutamine-hydrolyzing] from Pelobacter propionicus (strain DSM 2379 / NBRC 103807 / OttBd1).